A 264-amino-acid polypeptide reads, in one-letter code: Apolipoprotein A-I (264 aa).

A signal peptide spans 1–18; it reads MRGVLVTLAVLFLTGTQA. Repeat copies occupy residues 67–88 and 89–110. The interval 67-264 is 10 X approximate tandem repeats; it reads LKLADNLDTL…LLDEVQKTMA (198 aa). One copy of the 3; half-length repeat lies at 111–121; that stretch reads KDLEEVKEKIR. A run of 5 repeats spans residues 122-143, 144-165, 166-187, 188-209, and 210-231. Residues 232–242 form a 9; half-length repeat; the sequence is PLVQEFKERLT. Repeat unit 10 spans residues 243–264; sequence PYAENLKNRLIDLLDEVQKTMA.

Belongs to the apolipoprotein A1/A4/E family. Major protein of VLDL, HDL, LDL and in chylomicrons. Expressed in a number of tissues including liver, small intestine, lung, kidney, heart and muscle with highest expression in liver and small intestine.

It is found in the secreted. Functionally, participates in the reverse transport of cholesterol from tissues to the liver for excretion by promoting cholesterol efflux from tissues and by acting as a cofactor for the lecithin cholesterol acyltransferase (LCAT). In Coturnix japonica (Japanese quail), this protein is Apolipoprotein A-I (APOA1).